Reading from the N-terminus, the 181-residue chain is Large ribosomal subunit protein uL5c (181 aa).

The protein belongs to the universal ribosomal protein uL5 family. As to quaternary structure, part of the 50S ribosomal subunit; contacts the 5S rRNA.

It localises to the plastid. It is found in the cyanelle. In terms of biological role, binds 5S rRNA, forms part of the central protuberance of the 50S subunit. The polypeptide is Large ribosomal subunit protein uL5c (rpl5) (Cyanophora paradoxa).